Reading from the N-terminus, the 283-residue chain is uncharacterized protein (283 aa).

The first 25 residues, 1–25 (MNKKRLLFRTPLDALFLLFGTALSA), serve as a signal peptide directing secretion. C26 carries N-palmitoyl cysteine lipidation. C26 carries the S-diacylglycerol cysteine lipid modification.

It belongs to the MG439/MG440 family.

It localises to the cell membrane. This is an uncharacterized protein from Mycoplasma pneumoniae (strain ATCC 29342 / M129 / Subtype 1) (Mycoplasmoides pneumoniae).